The sequence spans 972 residues: Hemoglobin and hemoglobin-haptoglobin-binding protein (972 aa).

Positions 1 to 22 (MKANKLSAITLCILGYAHTVYA) are cleaved as a signal peptide. A TonB box motif is present at residues 32–39 (ETIVVSSE). Positions 38 to 167 (SEDDSVHNKN…LGGTVSFESK (130 aa)) constitute a TBDR plug domain. The region spanning 175–972 (DKNYHFGYKT…NFRVNAEITF (798 aa)) is the TBDR beta-barrel domain. Positions 955–972 (KRFNAPGRNFRVNAEITF) match the TonB C-terminal box motif.

The protein belongs to the TonB-dependent receptor family. Hemoglobin/haptoglobin binding protein subfamily.

The protein localises to the cell outer membrane. Acts as a receptor for hemoglobin or the hemoglobin/haptoglobin complex of the host and is required for heme uptake. May be involved in virulence. The chain is Hemoglobin and hemoglobin-haptoglobin-binding protein from Haemophilus ducreyi (strain 35000HP / ATCC 700724).